Here is a 260-residue protein sequence, read N- to C-terminus: 5'-nucleotidase SurE (260 aa).

Positions 8, 9, 43, and 96 each coordinate a divalent metal cation.

Belongs to the SurE nucleotidase family. The cofactor is a divalent metal cation.

The protein resides in the cytoplasm. It carries out the reaction a ribonucleoside 5'-phosphate + H2O = a ribonucleoside + phosphate. In terms of biological role, nucleotidase that shows phosphatase activity on nucleoside 5'-monophosphates. The polypeptide is 5'-nucleotidase SurE (Ruegeria sp. (strain TM1040) (Silicibacter sp.)).